We begin with the raw amino-acid sequence, 157 residues long: ATP synthase subunit b', chloroplastic (157 aa).

Residues 26 to 43 (LMASQFLLIMLILDITFY) traverse the membrane as a helical segment.

Belongs to the ATPase B chain family. In terms of assembly, F-type ATPases have 2 components, F(1) - the catalytic core - and F(0) - the membrane proton channel. F(1) has five subunits: alpha(3), beta(3), gamma(1), delta(1), epsilon(1). F(0) has four main subunits: a(1), b(1), b'(1) and c(10-14). The alpha and beta chains form an alternating ring which encloses part of the gamma chain. F(1) is attached to F(0) by a central stalk formed by the gamma and epsilon chains, while a peripheral stalk is formed by the delta, b and b' chains.

Its subcellular location is the plastid. It is found in the chloroplast thylakoid membrane. Its function is as follows. F(1)F(0) ATP synthase produces ATP from ADP in the presence of a proton or sodium gradient. F-type ATPases consist of two structural domains, F(1) containing the extramembraneous catalytic core and F(0) containing the membrane proton channel, linked together by a central stalk and a peripheral stalk. During catalysis, ATP synthesis in the catalytic domain of F(1) is coupled via a rotary mechanism of the central stalk subunits to proton translocation. Functionally, component of the F(0) channel, it forms part of the peripheral stalk, linking F(1) to F(0). The b'-subunit is a diverged and duplicated form of b found in plants and photosynthetic bacteria. The chain is ATP synthase subunit b', chloroplastic from Cyanidium caldarium (Red alga).